A 308-amino-acid polypeptide reads, in one-letter code: V-type immunoglobulin domain-containing suppressor of T-cell activation (308 aa).

A signal peptide spans 1 to 32; it reads MGVPAVPEASSPRWGTLLLAIFLAASRGLVAA. Residues 33–167 form the Ig-like V-type domain; it reads FKVTTPYSLY…RFYGSMELQV (135 aa). Over 33 to 191 the chain is Extracellular; that stretch reads FKVTTPYSLY…EQDSDSITAA (159 aa). Asparagine 49, asparagine 91, and asparagine 127 each carry an N-linked (GlcNAc...) asparagine glycan. Cysteine 54 and cysteine 145 are disulfide-bonded. The helical transmembrane segment at 192–212 threads the bilayer; it reads ALATGACIVGILCLPLILLLV. The Cytoplasmic segment spans residues 213–308; the sequence is YKQRQVASHR…VPDSPNSEAI (96 aa). Positions 230–308 are disordered; it reads MDSNTQGIEN…VPDSPNSEAI (79 aa). Serine 232 is subject to Phosphoserine.

In terms of processing, at the cell surface, may be cleaved by MMP14. N-glycosylated. In terms of tissue distribution, expressed in spleen, thymus, bone marrow, lymph node, and in T-cells within the lamina propria of the small intestine. Detected on CD4+ and CD8+ T-cells, bone marrow-derived dendritic cells (BMDCs), peritoneal macrophages, neutrophils, and natural killer (NK) cells. In spleen and lymph nodes, highly expressed on CD4+ T-cell populations, and at lower levels on CD8+ T-cells. In thymus, has low expression on CD4+ cells and CD8+ cells, and not detected on CD4+CD8+ cells. Expressed in splenic and peritoneal CD11b cells. Not detected in most B cells and NK cells (at protein level). Also detected at lower levels in non-hematopoeitic tissues such as heart, brain, lung, kidney, muscle, ovary, and testis.

The protein localises to the cell membrane. Functionally, immunoregulatory receptor which inhibits the T-cell response. May promote differentiation of embryonic stem cells, by inhibiting BMP4 signaling. May stimulate MMP14-mediated MMP2 activation. The sequence is that of V-type immunoglobulin domain-containing suppressor of T-cell activation from Mus musculus (Mouse).